Consider the following 171-residue polypeptide: Small ribosomal subunit protein uS5 (171 aa).

The S5 DRBM domain occupies 16–79 (LVERLVTVDR…EAAKRNMITV (64 aa)).

This sequence belongs to the universal ribosomal protein uS5 family. Part of the 30S ribosomal subunit. Contacts proteins S4 and S8.

In terms of biological role, with S4 and S12 plays an important role in translational accuracy. Functionally, located at the back of the 30S subunit body where it stabilizes the conformation of the head with respect to the body. This Psychrobacter arcticus (strain DSM 17307 / VKM B-2377 / 273-4) protein is Small ribosomal subunit protein uS5.